The sequence spans 527 residues: MVSIVVHKPSFSYPSVSSSSMKKKPRHHQQLKQHRQNQYNNNGFTSLSFTKPSPTPLLIEKQSIHRTQLEALDSVITDLETSAQKGISLTEPEIFASLLETCYSLRAIDHGVRVHHLIPPYLLRNNLGISSKLVRLYASCGYAEVAHEVFDRMSKRDSSPFAWNSLISGYAELGQYEDAMALYFQMAEDGVKPDRFTFPRVLKACGGIGSVQIGEAIHRDLVKEGFGYDVYVLNALVVMYAKCGDIVKARNVFDMIPHKDYVSWNSMLTGYLHHGLLHEALDIFRLMVQNGIEPDKVAISSVLARVLSFKHGRQLHGWVIRRGMEWELSVANALIVLYSKRGQLGQACFIFDQMLERDTVSWNAIISAHSKNSNGLKYFEQMHRANAKPDGITFVSVLSLCANTGMVEDGERLFSLMSKEYGIDPKMEHYACMVNLYGRAGMMEEAYSMIVQEMGLEAGPTVWGALLYACYLHGNTDIGEVAAQRLFELEPDNEHNFELLIRIYSKAKRAEDVERVRQMMVDRGLET.

The N-terminal 47 residues, 1–47 (MVSIVVHKPSFSYPSVSSSSMKKKPRHHQQLKQHRQNQYNNNGFTSL), are a transit peptide targeting the chloroplast. Positions 12-44 (SYPSVSSSSMKKKPRHHQQLKQHRQNQYNNNGF) are disordered. Basic residues predominate over residues 21-35 (MKKKPRHHQQLKQHR). PPR repeat units follow at residues 126-156 (NLGI…MSKR), 159-193 (SPFA…GVKP), 194-228 (DRFT…GFGY), 229-259 (DVYV…IPHK), 260-294 (DYVS…GIEP), 295-326 (DKVA…GMEW), 327-361 (ELSV…DTVS), 367-389 (SAHS…NAKP), 390-425 (DGIT…GIDP), and 426-457 (KMEH…MGLE). Residues 462 to 527 (VWGALLYACY…QMMVDRGLET (66 aa)) are type E motif; degenerate.

It belongs to the PPR family. PCMP-E subfamily.

The protein resides in the plastid. The protein localises to the chloroplast. The sequence is that of Pentatricopeptide repeat-containing protein At4g25270, chloroplastic (PCMP-E53) from Arabidopsis thaliana (Mouse-ear cress).